A 365-amino-acid polypeptide reads, in one-letter code: UDP-N-acetylglucosamine--N-acetylmuramyl-(pentapeptide) pyrophosphoryl-undecaprenol N-acetylglucosamine transferase (365 aa).

UDP-N-acetyl-alpha-D-glucosamine is bound by residues threonine 20 to glycine 22, asparagine 132, arginine 168, serine 196, isoleucine 253, and glutamine 298.

The protein belongs to the glycosyltransferase 28 family. MurG subfamily.

Its subcellular location is the cell inner membrane. It carries out the reaction di-trans,octa-cis-undecaprenyl diphospho-N-acetyl-alpha-D-muramoyl-L-alanyl-D-glutamyl-meso-2,6-diaminopimeloyl-D-alanyl-D-alanine + UDP-N-acetyl-alpha-D-glucosamine = di-trans,octa-cis-undecaprenyl diphospho-[N-acetyl-alpha-D-glucosaminyl-(1-&gt;4)]-N-acetyl-alpha-D-muramoyl-L-alanyl-D-glutamyl-meso-2,6-diaminopimeloyl-D-alanyl-D-alanine + UDP + H(+). It functions in the pathway cell wall biogenesis; peptidoglycan biosynthesis. Its function is as follows. Cell wall formation. Catalyzes the transfer of a GlcNAc subunit on undecaprenyl-pyrophosphoryl-MurNAc-pentapeptide (lipid intermediate I) to form undecaprenyl-pyrophosphoryl-MurNAc-(pentapeptide)GlcNAc (lipid intermediate II). In Ralstonia nicotianae (strain ATCC BAA-1114 / GMI1000) (Ralstonia solanacearum), this protein is UDP-N-acetylglucosamine--N-acetylmuramyl-(pentapeptide) pyrophosphoryl-undecaprenol N-acetylglucosamine transferase.